Consider the following 165-residue polypeptide: uncharacterized protein (165 aa).

Residues 4–26 (FVIGTMIALAGLLVGGGVGSYFT) form a helical membrane-spanning segment.

Its subcellular location is the membrane. This is an uncharacterized protein from Aquifex aeolicus (strain VF5).